A 149-amino-acid polypeptide reads, in one-letter code: Large ribosomal subunit protein eL24A (149 aa).

Composition is skewed to basic and acidic residues over residues K93–A102 and K116–A125. The interval K93 to H149 is disordered.

It belongs to the eukaryotic ribosomal protein eL24 family. Component of the large ribosomal subunit (LSU). Mature yeast ribosomes consist of a small (40S) and a large (60S) subunit. The 40S small subunit contains 1 molecule of ribosomal RNA (18S rRNA) and at least 33 different proteins. The large 60S subunit contains 3 rRNA molecules (25S, 5.8S and 5S rRNA) and at least 46 different proteins.

Its subcellular location is the cytoplasm. Its function is as follows. Component of the ribosome, a large ribonucleoprotein complex responsible for the synthesis of proteins in the cell. The small ribosomal subunit (SSU) binds messenger RNAs (mRNAs) and translates the encoded message by selecting cognate aminoacyl-transfer RNA (tRNA) molecules. The large subunit (LSU) contains the ribosomal catalytic site termed the peptidyl transferase center (PTC), which catalyzes the formation of peptide bonds, thereby polymerizing the amino acids delivered by tRNAs into a polypeptide chain. The nascent polypeptides leave the ribosome through a tunnel in the LSU and interact with protein factors that function in enzymatic processing, targeting, and the membrane insertion of nascent chains at the exit of the ribosomal tunnel. In Schizosaccharomyces pombe (strain 972 / ATCC 24843) (Fission yeast), this protein is Large ribosomal subunit protein eL24A (rpl2401).